The sequence spans 152 residues: Deoxyuridine 5'-triphosphate nucleotidohydrolase (152 aa).

Residues arginine 71–glycine 73, asparagine 84, leucine 88–aspartate 90, and methionine 98 each bind substrate.

This sequence belongs to the dUTPase family. Homotrimer. Mg(2+) serves as cofactor.

The catalysed reaction is dUTP + H2O = dUMP + diphosphate + H(+). Its pathway is pyrimidine metabolism; dUMP biosynthesis; dUMP from dCTP (dUTP route): step 2/2. Its function is as follows. This enzyme is involved in nucleotide metabolism: it produces dUMP, the immediate precursor of thymidine nucleotides and it decreases the intracellular concentration of dUTP so that uracil cannot be incorporated into DNA. The protein is Deoxyuridine 5'-triphosphate nucleotidohydrolase of Escherichia coli O1:K1 / APEC.